The chain runs to 347 residues: Dihydroorotate dehydrogenase (quinone) (347 aa).

Residues Ala-62–Lys-66 and Ala-86 each bind FMN. Lys-66 is a binding site for substrate. Asn-111 to Phe-115 contacts substrate. Residues Asn-139 and Asn-172 each coordinate FMN. Asn-172 lines the substrate pocket. Residue Ser-175 is the Nucleophile of the active site. Asn-177 is a binding site for substrate. FMN contacts are provided by Lys-217 and Thr-245. Asn-246–Thr-247 contacts substrate. FMN is bound by residues Gly-268, Gly-297, and Tyr-318 to Thr-319.

It belongs to the dihydroorotate dehydrogenase family. Type 2 subfamily. In terms of assembly, monomer. It depends on FMN as a cofactor.

It is found in the cell membrane. It catalyses the reaction (S)-dihydroorotate + a quinone = orotate + a quinol. It functions in the pathway pyrimidine metabolism; UMP biosynthesis via de novo pathway; orotate from (S)-dihydroorotate (quinone route): step 1/1. In terms of biological role, catalyzes the conversion of dihydroorotate to orotate with quinone as electron acceptor. This Coxiella burnetii (strain CbuK_Q154) (Coxiella burnetii (strain Q154)) protein is Dihydroorotate dehydrogenase (quinone).